We begin with the raw amino-acid sequence, 29 residues long: Probable small toxic protein BsrH (29 aa).

The helical transmembrane segment at 6–26 (FQALMLMLAFGSFIIALLTYI) threads the bilayer.

The protein localises to the cell membrane. Its function is as follows. Possible toxic component of a type I toxin-antitoxin (TA) system; an overlapping antisense RNA has been identified. The chain is Probable small toxic protein BsrH from Bacillus subtilis (strain 168).